A 156-amino-acid polypeptide reads, in one-letter code: tRNA-specific adenosine deaminase (156 aa).

Residues Thr2–Ser120 form the CMP/dCMP-type deaminase domain. His53 contacts Zn(2+). Glu55 acts as the Proton donor in catalysis. Zn(2+)-binding residues include Cys83 and Cys86.

The protein belongs to the cytidine and deoxycytidylate deaminase family. In terms of assembly, homodimer. Zn(2+) serves as cofactor.

It carries out the reaction adenosine(34) in tRNA + H2O + H(+) = inosine(34) in tRNA + NH4(+). Catalyzes the deamination of adenosine to inosine at the wobble position 34 of tRNA(Arg2). The protein is tRNA-specific adenosine deaminase of Staphylococcus aureus (strain Mu50 / ATCC 700699).